The primary structure comprises 480 residues: Proline--tRNA ligase (480 aa).

This sequence belongs to the class-II aminoacyl-tRNA synthetase family. ProS type 3 subfamily. As to quaternary structure, homodimer.

The protein resides in the cytoplasm. The catalysed reaction is tRNA(Pro) + L-proline + ATP = L-prolyl-tRNA(Pro) + AMP + diphosphate. In terms of biological role, catalyzes the attachment of proline to tRNA(Pro) in a two-step reaction: proline is first activated by ATP to form Pro-AMP and then transferred to the acceptor end of tRNA(Pro). This Metallosphaera sedula (strain ATCC 51363 / DSM 5348 / JCM 9185 / NBRC 15509 / TH2) protein is Proline--tRNA ligase.